The chain runs to 53 residues: Light-harvesting protein B-800/850 alpha chain (53 aa).

The Cytoplasmic segment spans residues 1–14 (MNQGKIWTVVNPSV). A helical membrane pass occupies residues 15–35 (GLPLLLGSVTVIAILVHAAVL). Residue His-31 participates in a bacteriochlorophyll binding. The Periplasmic portion of the chain corresponds to 36-53 (SHTTWFPAYWQGGLKKAA).

This sequence belongs to the antenna complex alpha subunit family. In terms of assembly, the core complex is formed by different alpha and beta chains, binding bacteriochlorophyll molecules, and arranged most probably in tetrameric structures disposed around the reaction center. The non-pigmented gamma chains may constitute additional components.

Its subcellular location is the cell inner membrane. Functionally, antenna complexes are light-harvesting systems, which transfer the excitation energy to the reaction centers. In Rhodoblastus acidophilus (Rhodopseudomonas acidophila), this protein is Light-harvesting protein B-800/850 alpha chain.